The primary structure comprises 223 residues: Deoxyribose-phosphate aldolase (223 aa).

Asp91 (proton donor/acceptor) is an active-site residue. Residue Lys153 is the Schiff-base intermediate with acetaldehyde of the active site. Lys182 functions as the Proton donor/acceptor in the catalytic mechanism.

This sequence belongs to the DeoC/FbaB aldolase family. DeoC type 1 subfamily.

The protein resides in the cytoplasm. The enzyme catalyses 2-deoxy-D-ribose 5-phosphate = D-glyceraldehyde 3-phosphate + acetaldehyde. It functions in the pathway carbohydrate degradation; 2-deoxy-D-ribose 1-phosphate degradation; D-glyceraldehyde 3-phosphate and acetaldehyde from 2-deoxy-alpha-D-ribose 1-phosphate: step 2/2. In terms of biological role, catalyzes a reversible aldol reaction between acetaldehyde and D-glyceraldehyde 3-phosphate to generate 2-deoxy-D-ribose 5-phosphate. The chain is Deoxyribose-phosphate aldolase from Streptococcus agalactiae serotype V (strain ATCC BAA-611 / 2603 V/R).